The chain runs to 70 residues: DNA gyrase inhibitor YacG (70 aa).

Zn(2+) contacts are provided by Cys-9, Cys-12, Cys-28, and Cys-32. The interval 43–70 is disordered; the sequence is ESRKIPGSSIDPESIVTSNNKQDNEDEQ.

The protein belongs to the DNA gyrase inhibitor YacG family. In terms of assembly, interacts with GyrB. Zn(2+) is required as a cofactor.

Functionally, inhibits all the catalytic activities of DNA gyrase by preventing its interaction with DNA. Acts by binding directly to the C-terminal domain of GyrB, which probably disrupts DNA binding by the gyrase. In Legionella pneumophila (strain Paris), this protein is DNA gyrase inhibitor YacG.